The sequence spans 349 residues: Early nodulin-like protein 2 (349 aa).

The first 28 residues, 1 to 28 (MTFLKMKSLSFFFTILLSLSTLFTISNA), serve as a signal peptide directing secretion. The Phytocyanin domain occupies 29–130 (RKFNVGGSGA…GQKLNVVVIS (102 aa)). Residues Cys-84 and Cys-118 are joined by a disulfide bond. The segment at 136 to 330 (TAQSPHAAAP…GQKKSSANGM (195 aa)) is disordered. Low complexity-rich tracts occupy residues 145-201 (PGSS…SPPG) and 224-234 (TSPVSPSSAPM). A compositionally biased stretch (polar residues) spans 249–260 (IPPSSAPMTSPP). The span at 263–312 (MAPKSSSPVSNSPTVSPSLAPGGSTSSSPSDSPSGSAMGPSGDGPSAAGD) shows a compositional bias: low complexity. Ser-325 carries the GPI-anchor amidated serine lipid modification. A propeptide spans 326 to 349 (SANGMTVMSITTVLSLVLTIFLSA) (removed in mature form).

It belongs to the early nodulin-like (ENODL) family. Mostly expressed in leaves and roots, and, to a lower extent, in seedlings, stems and flowers, but barely in seeds.

The protein localises to the cell membrane. Functionally, may act as a carbohydrate transporter. The polypeptide is Early nodulin-like protein 2 (Arabidopsis thaliana (Mouse-ear cress)).